The chain runs to 479 residues: Aspartyl/glutamyl-tRNA(Asn/Gln) amidotransferase subunit B (479 aa).

This sequence belongs to the GatB/GatE family. GatB subfamily. As to quaternary structure, heterotrimer of A, B and C subunits.

It catalyses the reaction L-glutamyl-tRNA(Gln) + L-glutamine + ATP + H2O = L-glutaminyl-tRNA(Gln) + L-glutamate + ADP + phosphate + H(+). The catalysed reaction is L-aspartyl-tRNA(Asn) + L-glutamine + ATP + H2O = L-asparaginyl-tRNA(Asn) + L-glutamate + ADP + phosphate + 2 H(+). Allows the formation of correctly charged Asn-tRNA(Asn) or Gln-tRNA(Gln) through the transamidation of misacylated Asp-tRNA(Asn) or Glu-tRNA(Gln) in organisms which lack either or both of asparaginyl-tRNA or glutaminyl-tRNA synthetases. The reaction takes place in the presence of glutamine and ATP through an activated phospho-Asp-tRNA(Asn) or phospho-Glu-tRNA(Gln). In Streptococcus pyogenes serotype M49 (strain NZ131), this protein is Aspartyl/glutamyl-tRNA(Asn/Gln) amidotransferase subunit B.